Consider the following 329-residue polypeptide: Phosphate acyltransferase (329 aa).

It belongs to the PlsX family. Homodimer. Probably interacts with PlsY.

The protein localises to the cytoplasm. The catalysed reaction is a fatty acyl-[ACP] + phosphate = an acyl phosphate + holo-[ACP]. Its pathway is lipid metabolism; phospholipid metabolism. In terms of biological role, catalyzes the reversible formation of acyl-phosphate (acyl-PO(4)) from acyl-[acyl-carrier-protein] (acyl-ACP). This enzyme utilizes acyl-ACP as fatty acyl donor, but not acyl-CoA. The polypeptide is Phosphate acyltransferase (Campylobacter lari (strain RM2100 / D67 / ATCC BAA-1060)).